The following is a 2437-amino-acid chain: Polyprotein P1234 (2437 aa).

Positions 28–259 (EAQQVTPNDH…ESRRLLKSWH (232 aa)) constitute an Alphavirus-like MT domain. The segment at 244 to 263 (GSTLYIESRRLLKSWHLPSV) is nsP1 membrane-binding. 2 S-palmitoyl cysteine; by host lipidation sites follow: cysteine 417 and cysteine 419. Residues 691 to 843 (DLINPPFHEF…HNICTEVDHK (153 aa)) form the (+)RNA virus helicase ATP-binding domain. 722–729 (GVPGSGKS) contacts a ribonucleoside 5'-triphosphate. Residues 844 to 992 (SISRRCTLPI…LEDWQREHDT (149 aa)) form the (+)RNA virus helicase C-terminal domain. One can recognise a Peptidase C9 domain in the interval 1005–1327 (DVFQNKAKVC…GKLSSIYAGT (323 aa)). Residues 1006–1025 (VFQNKAKVCWAKCLVPVLET) are nucleolus localization signal. The For cysteine protease nsP2 activity role is filled by cysteine 1014. The Nuclear export signal motif lies at 1059–1068 (TKIYGVDLDS). Catalysis depends on histidine 1084, which acts as the For cysteine protease nsP2 activity. The short motif at 1182-1186 (PRRKV) is the Nuclear localization signal element. In terms of domain architecture, Macro spans 1335–1493 (APAYAVKRAD…QKIKTVLQNR (159 aa)). The ADP-D-ribose site is built by aspartate 1344, asparagine 1358, glycine 1366, glycine 1446, isoleucine 1447, and phenylalanine 1448. Zn(2+)-binding residues include cysteine 1596, cysteine 1598, cysteine 1621, and cysteine 1639. Over residues 1675–1684 (TSDSSSLSTF) the composition is skewed to low complexity. Positions 1675–1729 (TSDSSSLSTFPDLESAEELDHDSQSVRPALNEPDDHQPTPTAELATHPVPPPRPN) are disordered. 2 short sequence motifs (FGDF; binding to host G3BP1) span residues 1792–1795 (FGAP) and 1804–1807 (FGDF). The RdRp catalytic domain occupies 2191-2306 (DHVLETDIAS…HGVVSDKLMA (116 aa)).

Interacts with non-structural protein 3. Interacts with RNA-directed RNA polymerase nsP4. Interacts with protease nsP2. interacts with itself. In terms of assembly, interacts with mRNA-capping enzyme nsP1. Interacts with host DDX1. Interacts with host DDX3. Interacts (via C-terminus) with host G3BP1; this interaction inhibits the formation of host stress granules on viral mRNAs and the nsp3-G3BP1 complexes bind viral RNAs and probably orchestrate the assembly of viral replication complexes. Interacts (via C-terminus) with host G3BP2; this interaction inhibits the formation of host stress granules on viral mRNAs and the nsp3-G3BP2 complexes bind viral RNAs and probably orchestrate the assembly of viral replication complexes. As to quaternary structure, interacts with mRNA-capping enzyme nsP1. Interacts with protease nsP2. interacts with itself. Interacts with RNA-directed RNA polymerase nsP4. Interacts with mRNA-capping enzyme nsP1. Interacts with KPNA1/karyopherin-alpha1; this interaction probably allows the active transport of protease nsP2 into the host nucleus. Interacts with host POLR2A/RPB1; this interaction seems to induce the depletion of host POLR2A and may play a role in the transcriptional shutoff induced by protease nsP2. Interacts with host GTF2E2/TF2E2; this interaction seems to induce the depletion of host GTF2E2/TF2E2 and may play a role in the transcriptional shutoff induced by protease nsP2. The cofactor is Mg(2+). Mn(2+) is required as a cofactor. Post-translationally, specific enzymatic cleavages in vivo yield mature proteins. The processing of the polyprotein is temporally regulated. In early stages (1.7 hpi), P1234 is first cleaved in trans through its nsP2 protease activity, releasing P123' and nsP4, which associate to form the early replication complex. At the same time, P1234 is also cut at the nsP1/nsP2 site early in infection but with lower efficiency. After replication of the viral minus-strand RNAs (4 hpi), the polyproteins are cut at the nsP1/nsP2 and nsP2/nsP3 sites very efficiently, preventing accumulation of P123' and P1234 and allowing the formation of the late replication complex. NsP3'/nsP4 site is not cleaved anymore and P34 is produced rather than nsP4. Specific enzymatic cleavages in vivo yield mature proteins. The processing of the polyprotein is temporally regulated. In early stages (1.7 hpi), P123 is cleaved at the nsP1/nsP2 site with low efficiency. After replication of the viral minus-strand RNAs (4 hpi), the polyproteins are cut at the nsP1/nsP2 and nsP2/nsP3 sites very efficiently, preventing accumulation of P123 and allowing the formation of the late replication complex. In terms of processing, specific enzymatic cleavages in vivo yield mature proteins. The processing of the polyprotein is temporally regulated. In early stages (1.7 hpi), P123' is cleaved at the nsP1/nsP2 site with low efficiency. After replication of the viral minus-strand RNAs (4 hpi), the polyproteins are cut at the nsP1/nsP2 and nsP2/nsP3 sites very efficiently, preventing accumulation of P123' and allowing the formation of the late replication complex. Post-translationally, palmitoylated by host palmitoyltransferases ZDHHC2 and ZDHHC19. Phosphorylated by host on serines and threonines. In terms of processing, ubiquitinated; targets the protein for rapid degradation via the ubiquitin system. Nsp4 is present in extremely low quantities due to low frequency of translation through the amber stop-codon and the degradation by the ubiquitin pathway.

Its subcellular location is the host cytoplasmic vesicle membrane. It localises to the host cell membrane. It is found in the host cell projection. The protein localises to the host filopodium. The protein resides in the host nucleus. Its subcellular location is the host cytoplasm. The enzyme catalyses GTP + S-adenosyl-L-methionine = N(7)-methyl-GTP + S-adenosyl-L-homocysteine. It catalyses the reaction N(7)-methyl-GTP + L-histidyl-[protein] = N(tele)-(N(7)-methylguanosine 5'-phospho)-L-histidyl-[protein] + diphosphate. The catalysed reaction is N(tele)-(N(7)-methylguanosine 5'-phospho)-L-histidyl-[protein] + a 5'-end diphospho-(purine-ribonucleoside) in mRNA + H(+) = a 5'-end (N(7)-methyl 5'-triphosphoguanosine)-(purine-ribonucleoside) in mRNA + L-histidyl-[protein]. It carries out the reaction a 5'-end triphospho-ribonucleoside in mRNA + H2O = a 5'-end diphospho-ribonucleoside in mRNA + phosphate + H(+). The enzyme catalyses a ribonucleoside 5'-triphosphate + H2O = a ribonucleoside 5'-diphosphate + phosphate + H(+). It catalyses the reaction ATP + H2O = ADP + phosphate + H(+). The catalysed reaction is RNA(n) + a ribonucleoside 5'-triphosphate = RNA(n+1) + diphosphate. It carries out the reaction RNA(n) + ATP = RNA(n)-3'-adenine ribonucleotide + diphosphate. The enzyme catalyses 4-O-(ADP-D-ribosyl)-L-aspartyl-[protein] + H2O = L-aspartyl-[protein] + ADP-D-ribose + H(+). It catalyses the reaction 5-O-(ADP-D-ribosyl)-L-glutamyl-[protein] + H2O = L-glutamyl-[protein] + ADP-D-ribose + H(+). The catalysed reaction is ADP-alpha-D-ribose 1''-phosphate + H2O = ADP-D-ribose + phosphate. Its function is as follows. Inactive precursor of the viral replicase, which is activated by cleavages carried out by the viral protease nsP2. Functionally, the early replication complex formed by the polyprotein P123 and nsP4 synthesizes minus-strand RNAs. As soon P123 is cleaved into mature proteins, the plus-strand RNAs synthesis begins. The early replication complex formed by the polyprotein P123' and nsP4 synthesizes minus-strand RNAs. Polyprotein P123' is a short-lived polyprotein that accumulates during early stage of infection. As soon P123' is cleaved into mature proteins, the plus-strand RNAs synthesis begins. In terms of biological role, cytoplasmic capping enzyme that catalyzes two virus-specific reactions: methyltransferase and nsP1 guanylyltransferase. mRNA-capping is necessary since all viral RNAs are synthesized in the cytoplasm, and host capping enzymes are restricted to the nucleus. The enzymatic reaction involves a covalent link between 7-methyl-GMP and nsP1, whereas eukaryotic capping enzymes form a covalent complex only with GMP. nsP1 capping consists in the following reactions: GTP is first methylated into 7-methyl-GMP and then is covalently linked to nsP1 to form the m7GMp-nsP1 complex from which 7-methyl-GMP complex is transferred to the mRNA to create the cap structure. NsP1 is needed for the initiation of the minus-strand RNAs synthesis. Probably serves as a membrane anchor for the replication complex composed of nsP1-nsP4. Palmitoylated nsP1 is remodeling host cell cytoskeleton, and induces filopodium-like structure formation at the surface of the host cell. Its function is as follows. Multifunctional protein whose N-terminus is part of the RNA polymerase complex and displays NTPase, RNA triphosphatase and helicase activities. NTPase and RNA triphosphatase are involved in viral RNA capping and helicase keeps a check on the dsRNA replication intermediates. The C-terminus harbors a protease that specifically cleaves the polyproteins and releases the mature proteins. Required for the shutoff of minus-strand RNAs synthesis. Specifically inhibits the host IFN response by promoting the nuclear export of host STAT1. Induces host transcription shutoff by inducing rapid proteasome-dependent degradation of POLR2A, a catalytic subunit of the RNAPII complex. The resulting inhibition of cellular protein synthesis serves to ensure maximal viral gene expression and to evade host immune response. Functionally, seems to be essential for minus-strand RNAs and subgenomic 26S mRNAs synthesis. Displays mono-ADP-ribosylhydrolase activity. ADP-ribosylation is a post-translational modification that controls various processes of the host cell and the virus probably needs to revert it for optimal viral replication. Binds proteins of FXR family and sequesters them into the viral RNA replication complexes thereby inhibiting the formation of host stress granules on viral mRNAs. The nsp3'-FXR complexes bind viral RNAs and probably orchestrate the assembly of viral replication complexes, thanks to the ability of FXR family members to self-assemble and bind DNA. Seems to be essential for minus-strand RNAs and subgenomic 26S mRNAs synthesis. Displays mono-ADP-ribosylhydrolase activity. ADP-ribosylation is a post-translantional modification that controls various processes of the host cell and the virus probably needs to revert it for optimal viral replication. Binds proteins of G3BP family and sequesters them into the viral RNA replication complexes thereby inhibiting the formation of host stress granules on viral mRNAs. The nsp3-G3BP complexes bind viral RNAs and probably orchestrate the assembly of viral replication complexes, thanks to the ability of G3BP family members to self-assemble and bind DNA. In terms of biological role, RNA dependent RNA polymerase. Replicates genomic and antigenomic RNA by recognizing replications specific signals. The early replication complex formed by the polyprotein P123 and nsP4 synthesizes minus-strand RNAs. The late replication complex composed of fully processed nsP1-nsP4 is responsible for the production of genomic and subgenomic plus-strand RNAs. The core catalytic domain of nsP4 also possesses terminal adenylyltransferase (TATase) activity that is probably involved in maintenance and repair of the poly(A) tail, an element required for replication of the viral genome. The chain is Polyprotein P1234 from Aedes aegypti (Yellowfever mosquito).